Reading from the N-terminus, the 158-residue chain is Botcinic acid biosynthesis cluster B protein 16 (158 aa).

It participates in polyketide biosynthesis. Functionally, part of the gene cluster B that mediates the biosynthesis of botcinic acid and its botcinin derivatives, acetate-derived polyketides that contribute to virulence when combined with the sesquiterpene botrydial. Botcinic acid and its derivatives have been shown to induce chlorosis and necrosis during host plant infection, but also have antifungal activities. Two polyketide synthases, BOA6 and BOA9, are involved in the biosynthesis of botcinins. BOA6 mediates the formation of the per-methylated tetraketide core by condensation of four units of malonyl-CoA with one unit of acetyl-CoA, which would be methylated in activated methylene groups to yield a bicyclic acid intermediate that could then either be converted to botrylactone derivatives or lose the starter acetate unit through a retro-Claisen type C-C bond cleavage to yield botcinin derivatives. The second polyketide synthase, BOA9, is probably required for the biosynthesis of the tetraketide side chain of botcinins. The methyltransferase (MT) domain within BOA6 is probably responsible for the incorporation of four methyl groups. The trans-enoyl reductase BOA5 might take over the enoyl reductase function of BOA6 that misses an ER domain. The monooxygenases BOA2, BOA3 and BOA4 might be involved in further hydroxylations at C4, C5 and C8, whereas BOA7, close to BOA9, could potentially be involved in the hydroxylation at C4 in the side chain of botcinins. The sequence is that of Botcinic acid biosynthesis cluster B protein 16 from Botryotinia fuckeliana (strain B05.10) (Noble rot fungus).